The primary structure comprises 547 residues: Chaperonin GroEL (547 aa).

ATP-binding positions include 29 to 32, 86 to 90, Gly-413, 479 to 481, and Asp-495; these read TLGP, DGTTT, and NAA.

This sequence belongs to the chaperonin (HSP60) family. Forms a cylinder of 14 subunits composed of two heptameric rings stacked back-to-back. Interacts with the co-chaperonin GroES.

It is found in the cytoplasm. It carries out the reaction ATP + H2O + a folded polypeptide = ADP + phosphate + an unfolded polypeptide.. Its function is as follows. Together with its co-chaperonin GroES, plays an essential role in assisting protein folding. The GroEL-GroES system forms a nano-cage that allows encapsulation of the non-native substrate proteins and provides a physical environment optimized to promote and accelerate protein folding. The chain is Chaperonin GroEL from Synechococcus sp. (strain RCC307).